The primary structure comprises 307 residues: Aquaporin Lacbi1:387054 (307 aa).

The Cytoplasmic segment spans residues 1 to 40 (MSNAPLVHLSDLQKRLRVFAVWEKVRNDGKVHWAIECFAE). The chain crosses the membrane as a helical span at residues 41–61 (MFGVFLYVYFGLGSTAGWVIG). Residues 62-68 (NIIKETN) are Extracellular-facing. The chain crosses the membrane as a helical span at residues 69–89 (LSSILQIGLAYAFGIWFAIGL). Residues 90-120 (CSSSSGGHFNPCVTLSFVVFKGFPKLKACRY) are Cytoplasmic-facing. The short motif at 99–101 (NPC) is the NPA 1 element. Residues 121–141 (IIAQILGAYIASALVYSQWNV) form a helical membrane-spanning segment. Topologically, residues 142–157 (LIEECTLGLIKAKAYD) are extracellular. A helical transmembrane segment spans residues 158 to 178 (TTMFTPNGPAGIFALYLVPGA). The short motif at 167 to 169 (AGI) is the NPA 2 element. The Cytoplasmic portion of the chain corresponds to 179–183 (QSVPR). Residues 184–203 (ALLNEFVNSTLIGMIIWAAL) form a helical membrane-spanning segment. Residues 204–216 (DPTNMMVPPAMGP) lie on the Extracellular side of the membrane. A helical transmembrane segment spans residues 217–237 (LFISLAYAAVIWGFATPAVAL). Residues 238-264 (NTARDLGARLFAMSIWGTKAAGSGYSA) are Cytoplasmic-facing. A helical membrane pass occupies residues 265–285 (IACLINIPATLLGVFLYEVFF). Residues 286 to 307 (TDSDRGKLLPILNGKKLKHIFS) are Extracellular-facing.

It belongs to the MIP/aquaporin (TC 1.A.8) family.

It localises to the membrane. It carries out the reaction H2O(in) = H2O(out). The enzyme catalyses NH4(+)(in) = NH4(+)(out). The catalysed reaction is urea(in) = urea(out). It catalyses the reaction glycerol(in) = glycerol(out). Its function is as follows. Water channel required to facilitate the transport of water across membranes. In addition to water, also shows strong ammonium transport activity. Also enables low but statistically significant glycerol and urea permeability. May be involved in fungal nitrogen (ammonium) support of the plant host in symbiosis. The protein is Aquaporin Lacbi1:387054 of Laccaria bicolor (strain S238N-H82 / ATCC MYA-4686) (Bicoloured deceiver).